Reading from the N-terminus, the 173-residue chain is Small ribosomal subunit protein uS5 (173 aa).

In terms of domain architecture, S5 DRBM spans 17–80 (LREKMIAVNR…EESRRNMIKV (64 aa)).

It belongs to the universal ribosomal protein uS5 family. As to quaternary structure, part of the 30S ribosomal subunit. Contacts proteins S4 and S8.

With S4 and S12 plays an important role in translational accuracy. Functionally, located at the back of the 30S subunit body where it stabilizes the conformation of the head with respect to the body. The sequence is that of Small ribosomal subunit protein uS5 from Delftia acidovorans (strain DSM 14801 / SPH-1).